Reading from the N-terminus, the 111-residue chain is MSFSECPLVISACKKFLQKRITIENEALINALITALAQTSTLNDLCLLPIQTYLLSYKNAFEWIHFVCIAITTILDNKYNWKNCTVDINYIFLHVTYIYNIKTKEYLDYCS.

Belongs to the asfivirus E111R family.

This is an uncharacterized protein from African swine fever virus (strain Badajoz 1971 Vero-adapted) (Ba71V).